We begin with the raw amino-acid sequence, 156 residues long: MIVLGIDPALGSLGWAVVAKDTAKLKYLASGIIKTNSKDEIHNRLAFINSTLEKVILEYQPNMAAIEETFVNTNSVTSLKLGYARGAIMSLIGRYNLDMREFKPNMVKKTVTGYGHAEKDQILHMIKLLLPGTSAITNSDEADAVAIAYTCHVMRV.

Active-site residues include D7, E67, and D140. D7, E67, and D140 together coordinate Mg(2+).

This sequence belongs to the RuvC family. Homodimer which binds Holliday junction (HJ) DNA. The HJ becomes 2-fold symmetrical on binding to RuvC with unstacked arms; it has a different conformation from HJ DNA in complex with RuvA. In the full resolvosome a probable DNA-RuvA(4)-RuvB(12)-RuvC(2) complex forms which resolves the HJ. Mg(2+) serves as cofactor.

The protein resides in the cytoplasm. It catalyses the reaction Endonucleolytic cleavage at a junction such as a reciprocal single-stranded crossover between two homologous DNA duplexes (Holliday junction).. The RuvA-RuvB-RuvC complex processes Holliday junction (HJ) DNA during genetic recombination and DNA repair. Endonuclease that resolves HJ intermediates. Cleaves cruciform DNA by making single-stranded nicks across the HJ at symmetrical positions within the homologous arms, yielding a 5'-phosphate and a 3'-hydroxyl group; requires a central core of homology in the junction. The consensus cleavage sequence is 5'-(A/T)TT(C/G)-3'. Cleavage occurs on the 3'-side of the TT dinucleotide at the point of strand exchange. HJ branch migration catalyzed by RuvA-RuvB allows RuvC to scan DNA until it finds its consensus sequence, where it cleaves and resolves the cruciform DNA. This is Crossover junction endodeoxyribonuclease RuvC from Rickettsia felis (strain ATCC VR-1525 / URRWXCal2) (Rickettsia azadi).